Consider the following 168-residue polypeptide: MYFSHQNRAHGSRRLAKETADALAQAETRGLISEVMYNEDQPRMTQMVLLPLLQQLGLQSRWQLWLTPQQRLSREWVESAGLPLTKVMQVSQMNPQVTLDSMIRALETGNYSVVIAWLHDDLTDDEHRRLTEAAEKGNAMGFLMRPVQPSLPGDRPRSGLRIHSRMVH.

Residues 105–111 (ALETGNY) form a ftsZ binding region. The lon protease binding stretch occupies residues 161-168 (RIHSRMVH).

The protein belongs to the SulA family. Interacts with FtsZ. Post-translationally, is rapidly cleaved and degraded by the Lon protease once DNA damage is repaired.

Component of the SOS system and an inhibitor of cell division. Accumulation of SulA causes rapid cessation of cell division and the appearance of long, non-septate filaments. In the presence of GTP, binds a polymerization-competent form of FtsZ in a 1:1 ratio, thus inhibiting FtsZ polymerization and therefore preventing it from participating in the assembly of the Z ring. This mechanism prevents the premature segregation of damaged DNA to daughter cells during cell division. This chain is Cell division inhibitor SulA, found in Cronobacter turicensis (strain DSM 18703 / CCUG 55852 / LMG 23827 / z3032).